A 182-amino-acid polypeptide reads, in one-letter code: Nuclear cap-binding protein subunit 2 (182 aa).

Residues Tyr13, Tyr35, 104–108, 115–119, and 125–126 each bind mRNA; these read RADLD, RQYGR, and QV. The RRM domain maps to 32–110; it reads NCVYVGNLSF…RIIRADLDHG (79 aa). The tract at residues 114-182 is disordered; the sequence is GRQYGRGASG…NPRYNRWKKN (69 aa). The span at 126–136 shows a compositional bias: basic and acidic residues; sequence VRDEMREEFDP. Over residues 145 to 175 the composition is skewed to polar residues; it reads RQPTSSRQLANYSGISSAPLGSSLELQSNPR.

Belongs to the RRM NCBP2 family. In terms of assembly, component of the nuclear cap-binding complex (CBC), a heterodimer composed of cbc1 and cbc2 that interacts with capped RNAs.

It is found in the cytoplasm. The protein localises to the perinuclear region. It localises to the nucleus. Functionally, component of the CBC complex, which binds co-transcriptionally to the 5' cap of pre-mRNAs and is involved in maturation, export and degradation of nuclear mRNAs. The chain is Nuclear cap-binding protein subunit 2 (cbc2) from Schizosaccharomyces pombe (strain 972 / ATCC 24843) (Fission yeast).